Consider the following 255-residue polypeptide: Pimeloyl-[acyl-carrier protein] methyl ester esterase (255 aa).

The AB hydrolase-1 domain maps to 16-242 (LVLLHGWGLN…AAHAPFISHP (227 aa)). Substrate contacts are provided by residues tryptophan 22, 82–83 (SL), and 143–147 (FLALQ). The active-site Nucleophile is serine 82. Active-site residues include aspartate 207 and histidine 235. Histidine 235 is a substrate binding site.

Belongs to the AB hydrolase superfamily. Carboxylesterase BioH family. In terms of assembly, monomer.

It localises to the cytoplasm. It catalyses the reaction 6-carboxyhexanoyl-[ACP] methyl ester + H2O = 6-carboxyhexanoyl-[ACP] + methanol + H(+). It participates in cofactor biosynthesis; biotin biosynthesis. The physiological role of BioH is to remove the methyl group introduced by BioC when the pimeloyl moiety is complete. It allows to synthesize pimeloyl-ACP via the fatty acid synthetic pathway through the hydrolysis of the ester bonds of pimeloyl-ACP esters. This chain is Pimeloyl-[acyl-carrier protein] methyl ester esterase, found in Pectobacterium atrosepticum (strain SCRI 1043 / ATCC BAA-672) (Erwinia carotovora subsp. atroseptica).